A 344-amino-acid chain; its full sequence is Protein-glutamate methylesterase/protein-glutamine glutaminase 1 (344 aa).

Positions 5 to 122 (RVLVVDDSAT…GTQEALAEIV (118 aa)) constitute a Response regulatory domain. A 4-aspartylphosphate modification is found at Asp-56. In terms of domain architecture, CheB-type methylesterase spans 151–343 (FMPSGDIVAI…QSILDLASAR (193 aa)). Residues Ser-163, His-189, and Asp-285 contribute to the active site.

The protein belongs to the CheB family. In terms of processing, phosphorylated by CheA. Phosphorylation of the N-terminal regulatory domain activates the methylesterase activity.

Its subcellular location is the cytoplasm. The enzyme catalyses [protein]-L-glutamate 5-O-methyl ester + H2O = L-glutamyl-[protein] + methanol + H(+). The catalysed reaction is L-glutaminyl-[protein] + H2O = L-glutamyl-[protein] + NH4(+). Its function is as follows. Involved in chemotaxis. Part of a chemotaxis signal transduction system that modulates chemotaxis in response to various stimuli. Catalyzes the demethylation of specific methylglutamate residues introduced into the chemoreceptors (methyl-accepting chemotaxis proteins or MCP) by CheR. Also mediates the irreversible deamidation of specific glutamine residues to glutamic acid. The chain is Protein-glutamate methylesterase/protein-glutamine glutaminase 1 from Caulobacter vibrioides (strain ATCC 19089 / CIP 103742 / CB 15) (Caulobacter crescentus).